A 1305-amino-acid polypeptide reads, in one-letter code: Junctional cadherin 5-associated protein (1305 aa).

7 disordered regions span residues 13–86, 120–151, 249–419, 450–545, 575–604, 616–795, and 818–1005; these read YKLS…PSTA, REQE…VGGR, GVPK…HTTA, KLDG…CEMQ, IPVK…EQSV, ALTG…SRQL, and FNKE…GLSA. Basic and acidic residues-rich tracts occupy residues 21–31, 69–82, 120–129, and 140–151; these read APHEDDGERRQ, PESR…HGER, REQEAREDPG, and HPREGPWEVGGR. Pro residues predominate over residues 337-358; the sequence is GLEPPVYVPPPSYKSPPQPAAH. Over residues 360–369 the composition is skewed to basic and acidic residues; sequence CPEEAVSRHE. 2 stretches are compositionally biased toward polar residues: residues 530-545 and 579-594; these read LVSS…CEMQ and SESQ…NDLK. Low complexity predominate over residues 595–604; sequence QSASLQEQSV. A compositionally biased stretch (polar residues) spans 669-683; that stretch reads QQTQTSFAHEPQSLQ. The span at 729–748 shows a compositional bias: low complexity; it reads SPKSQGSLSPSSNSAFSGSS. The residue at position 841 (Ser-841) is a Phosphoserine. Composition is skewed to basic and acidic residues over residues 878-889 and 945-958; these read SKSESWSEEGRP and AKPE…EQRE. Phosphoserine is present on residues Ser-1004, Ser-1010, Ser-1152, and Ser-1239. Disordered regions lie at residues 1062-1166 and 1234-1305; these read GAQR…DVET and SRAA…VERV. Residues 1276 to 1288 are compositionally biased toward basic and acidic residues; sequence ADGHPAARRENGG.

Its subcellular location is the cell junction. The protein localises to the adherens junction. The polypeptide is Junctional cadherin 5-associated protein (JCAD) (Bos taurus (Bovine)).